The following is a 197-amino-acid chain: 3-isopropylmalate dehydratase small subunit (197 aa).

This sequence belongs to the LeuD family. LeuD type 1 subfamily. As to quaternary structure, heterodimer of LeuC and LeuD.

It catalyses the reaction (2R,3S)-3-isopropylmalate = (2S)-2-isopropylmalate. The protein operates within amino-acid biosynthesis; L-leucine biosynthesis; L-leucine from 3-methyl-2-oxobutanoate: step 2/4. Catalyzes the isomerization between 2-isopropylmalate and 3-isopropylmalate, via the formation of 2-isopropylmaleate. The chain is 3-isopropylmalate dehydratase small subunit from Acidothermus cellulolyticus (strain ATCC 43068 / DSM 8971 / 11B).